Reading from the N-terminus, the 203-residue chain is Imidazoleglycerol-phosphate dehydratase (203 aa).

Belongs to the imidazoleglycerol-phosphate dehydratase family.

The protein localises to the cytoplasm. The catalysed reaction is D-erythro-1-(imidazol-4-yl)glycerol 3-phosphate = 3-(imidazol-4-yl)-2-oxopropyl phosphate + H2O. Its pathway is amino-acid biosynthesis; L-histidine biosynthesis; L-histidine from 5-phospho-alpha-D-ribose 1-diphosphate: step 6/9. The sequence is that of Imidazoleglycerol-phosphate dehydratase from Helicobacter hepaticus (strain ATCC 51449 / 3B1).